The chain runs to 150 residues: Arginine repressor (150 aa).

The protein belongs to the ArgR family.

Its subcellular location is the cytoplasm. Its pathway is amino-acid biosynthesis; L-arginine biosynthesis [regulation]. Regulates arginine biosynthesis genes. The polypeptide is Arginine repressor (Desulforudis audaxviator (strain MP104C)).